A 262-amino-acid polypeptide reads, in one-letter code: uncharacterized protein (262 aa).

Helical transmembrane passes span 4–24 (LIVF…RFLG), 28–48 (VSRF…CLFR), and 62–82 (CYLA…SHIL). The stretch at 152–181 (EREARAQEHDRISAEVETITSACENLEAAM) forms a coiled coil.

Its subcellular location is the mitochondrion membrane. This is an uncharacterized protein from Arabidopsis thaliana (Mouse-ear cress).